The following is a 320-amino-acid chain: tRNA U34 carboxymethyltransferase (320 aa).

Carboxy-S-adenosyl-L-methionine-binding positions include lysine 89, tryptophan 103, lysine 108, glycine 128, 150 to 152 (DPT), 179 to 180 (IE), methionine 194, tyrosine 198, and arginine 313.

The protein belongs to the class I-like SAM-binding methyltransferase superfamily. CmoB family. In terms of assembly, homotetramer.

The enzyme catalyses carboxy-S-adenosyl-L-methionine + 5-hydroxyuridine(34) in tRNA = 5-carboxymethoxyuridine(34) in tRNA + S-adenosyl-L-homocysteine + H(+). Catalyzes carboxymethyl transfer from carboxy-S-adenosyl-L-methionine (Cx-SAM) to 5-hydroxyuridine (ho5U) to form 5-carboxymethoxyuridine (cmo5U) at position 34 in tRNAs. The protein is tRNA U34 carboxymethyltransferase of Actinobacillus pleuropneumoniae serotype 7 (strain AP76).